A 262-amino-acid polypeptide reads, in one-letter code: Large ribosomal subunit protein uL10m (262 aa).

The N-terminal 28 residues, 1–28 (MAAAVAGILRGGLPPRAAWLPTLQTVRH), are a transit peptide targeting the mitochondrion. The interval 243 to 262 (GDCATSANEKLHPPDPAPDA) is disordered.

The protein belongs to the universal ribosomal protein uL10 family. As to quaternary structure, component of the mitochondrial ribosome large subunit (39S) which comprises a 16S rRNA and about 50 distinct proteins.

The protein localises to the mitochondrion. The polypeptide is Large ribosomal subunit protein uL10m (Mrpl10) (Mus musculus (Mouse)).